Reading from the N-terminus, the 152-residue chain is Small ribosomal subunit protein uS13 (152 aa).

Belongs to the universal ribosomal protein uS13 family. As to quaternary structure, component of the small ribosomal subunit.

Its subcellular location is the cytoplasm. Its function is as follows. Component of the small ribosomal subunit. The ribosome is a large ribonucleoprotein complex responsible for the synthesis of proteins in the cell. This chain is Small ribosomal subunit protein uS13 (rps18), found in Ictalurus punctatus (Channel catfish).